A 312-amino-acid chain; its full sequence is Aspartate carbamoyltransferase catalytic subunit (312 aa).

Residues R62 and T63 each coordinate carbamoyl phosphate. K90 contacts L-aspartate. The carbamoyl phosphate site is built by R112, H140, and Q143. Residues R173 and R228 each contribute to the L-aspartate site. 2 residues coordinate carbamoyl phosphate: G269 and P270.

The protein belongs to the aspartate/ornithine carbamoyltransferase superfamily. ATCase family. In terms of assembly, heterododecamer (2C3:3R2) of six catalytic PyrB chains organized as two trimers (C3), and six regulatory PyrI chains organized as three dimers (R2).

It carries out the reaction carbamoyl phosphate + L-aspartate = N-carbamoyl-L-aspartate + phosphate + H(+). The protein operates within pyrimidine metabolism; UMP biosynthesis via de novo pathway; (S)-dihydroorotate from bicarbonate: step 2/3. In terms of biological role, catalyzes the condensation of carbamoyl phosphate and aspartate to form carbamoyl aspartate and inorganic phosphate, the committed step in the de novo pyrimidine nucleotide biosynthesis pathway. This is Aspartate carbamoyltransferase catalytic subunit from Deinococcus geothermalis (strain DSM 11300 / CIP 105573 / AG-3a).